Reading from the N-terminus, the 360-residue chain is Histidinol-phosphate aminotransferase (360 aa).

Lys-223 carries the N6-(pyridoxal phosphate)lysine modification.

This sequence belongs to the class-II pyridoxal-phosphate-dependent aminotransferase family. Histidinol-phosphate aminotransferase subfamily. As to quaternary structure, homodimer. Pyridoxal 5'-phosphate is required as a cofactor.

The enzyme catalyses L-histidinol phosphate + 2-oxoglutarate = 3-(imidazol-4-yl)-2-oxopropyl phosphate + L-glutamate. The protein operates within amino-acid biosynthesis; L-histidine biosynthesis; L-histidine from 5-phospho-alpha-D-ribose 1-diphosphate: step 7/9. The sequence is that of Histidinol-phosphate aminotransferase (hisC) from Bacillus subtilis (strain 168).